We begin with the raw amino-acid sequence, 157 residues long: Protein Smg (157 aa).

It belongs to the Smg family.

This chain is Protein Smg, found in Shigella boydii serotype 4 (strain Sb227).